The sequence spans 203 residues: uncharacterized protein (203 aa).

This is an uncharacterized protein from Caldicellulosiruptor sp. (strain Rt8B.4).